The following is a 217-amino-acid chain: Large ribosomal subunit protein uL3 (217 aa).

It belongs to the universal ribosomal protein uL3 family. As to quaternary structure, part of the 50S ribosomal subunit. Forms a cluster with proteins L14 and L19.

In terms of biological role, one of the primary rRNA binding proteins, it binds directly near the 3'-end of the 23S rRNA, where it nucleates assembly of the 50S subunit. In Mycolicibacterium paratuberculosis (strain ATCC BAA-968 / K-10) (Mycobacterium paratuberculosis), this protein is Large ribosomal subunit protein uL3.